A 930-amino-acid polypeptide reads, in one-letter code: Pyruvate dehydrogenase E1 component (930 aa).

Positions 1-10 (MTTDFARHDL) are enriched in basic and acidic residues. Residues 1-21 (MTTDFARHDLAQNSNSASEPD) are disordered. An Isoglutamyl lysine isopeptide (Lys-Gln) (interchain with Q-Cter in protein Pup) cross-link involves residue lysine 375.

Homodimer. Part of the PDH complex, consisting of multiple copies of AceE (E1), DlaT (E2) and Lpd (E3). Mg(2+) is required as a cofactor. Thiamine diphosphate serves as cofactor.

It carries out the reaction N(6)-[(R)-lipoyl]-L-lysyl-[protein] + pyruvate + H(+) = N(6)-[(R)-S(8)-acetyldihydrolipoyl]-L-lysyl-[protein] + CO2. Functionally, component of the pyruvate dehydrogenase (PDH) complex, that catalyzes the overall conversion of pyruvate to acetyl-CoA and CO(2). AceE has reductase activity with pyruvate but does not react with 2-oxoglutarate. In Mycobacterium tuberculosis (strain ATCC 25618 / H37Rv), this protein is Pyruvate dehydrogenase E1 component (aceE).